A 241-amino-acid polypeptide reads, in one-letter code: Chaperone protein HifB (241 aa).

Residues methionine 1 to asparagine 27 form the signal peptide.

The protein belongs to the periplasmic pilus chaperone family.

Its subcellular location is the periplasm. Functionally, mediates assembly of pili by forming soluble multimeric complexes with pili subunits as an intermediate step in the assembly process. This protein is involved in type B pili (HifA) assembly. The protein is Chaperone protein HifB (hifB) of Haemophilus influenzae.